We begin with the raw amino-acid sequence, 35 residues long: MSDIN-like toxin proprotein 8 (35 aa).

Residues Met1 to Pro10 constitute a propeptide that is removed on maturation. A cross-link (cyclopeptide (Phe-Pro)) is located at residues Phe11 to Pro18. The propeptide occupies Cys19 to Cys35.

This sequence belongs to the MSDIN fungal toxin family. Post-translationally, processed by the macrocyclase-peptidase enzyme POPB to yield a toxic cyclic octapeptide. POPB first removes 10 residues from the N-terminus. Conformational trapping of the remaining peptide forces the enzyme to release this intermediate rather than proceed to macrocyclization. The enzyme rebinds the remaining peptide in a different conformation and catalyzes macrocyclization of the N-terminal 8 residues. As to expression, expressed in basidiocarps.

Probable toxin that belongs to the MSDIN-like toxin family responsible for a large number of food poisoning cases and deaths. The sequence is that of MSDIN-like toxin proprotein 8 from Amanita exitialis (Guangzhou destroying angel).